The sequence spans 197 residues: Female-specific protein transformer (197 aa).

Basic and acidic residues-rich tracts occupy residues 1 to 17 and 24 to 39; these read MKMD…DSRG and RERE…DSRK. Disordered stretches follow at residues 1–136 and 158–197; these read MKMD…PKII and GYQR…RPPY. 2 stretches are compositionally biased toward basic residues: residues 58–75 and 84–127; these read RRLR…RSRS and SRHR…RSPH. Positions 163–172 are enriched in pro residues; it reads PRPPPFPPAP.

The protein resides in the nucleus speckle. In terms of biological role, member of the regulatory pathway controlling female somatic sexual differentiation, regulated by Sxl. Activates dsx female-specific splicing by promoting the formation of a splicing enhancer complex which consists of tra, tra2 and sr proteins. Together with tra-2, plays a role in switching fru splicing from the male-specific pattern to the female-specific pattern through activation of the female-specific fru 5'-splice site. No known function in males. This is Female-specific protein transformer (tra) from Drosophila melanogaster (Fruit fly).